The chain runs to 309 residues: Taste receptor type 2 member 8 (309 aa).

Residues 1 to 7 (MFSPADN) lie on the Extracellular side of the membrane. A helical membrane pass occupies residues 8-28 (IFIILITGEFILGILGNGYIA). Over 29-50 (LVNWIDWIKKKKISTIDYILTN) the chain is Cytoplasmic. The chain crosses the membrane as a helical span at residues 51 to 71 (LVISRICLISVMVVNGIVIAV). Topologically, residues 72-82 (YPDVYTKSKLQ) are extracellular. Residues 83 to 103 (IAICTFWTFANYLNMWITTCL) form a helical membrane-spanning segment. Topologically, residues 104–131 (NVFYFLKIANSSHPLFLWLKQKIDMVVR) are cytoplasmic. A helical transmembrane segment spans residues 132–152 (WILLGCFAISLLVSLIAAIVL). The Extracellular segment spans residues 153–184 (SYDYRFHAIAKHKRNITEMFHVSKRPYFEPLT). N-linked (GlcNAc...) asparagine glycosylation occurs at N167. Residues 185–205 (LFNLFAIVPFIVSLISFFLLV) form a helical membrane-spanning segment. The Cytoplasmic portion of the chain corresponds to 206–239 (RSLWRHTKQIKLYATGGRDPSTEVHVRAIKTMTS). Residues 240 to 260 (FIFLFFLYYISSILVTFSYLM) form a helical membrane-spanning segment. The Extracellular portion of the chain corresponds to 261 to 266 (TKYKLA). Residues 267–287 (VEFGEIVAILYPLGHSLILIV) form a helical membrane-spanning segment. The Cytoplasmic portion of the chain corresponds to 288 to 309 (LNNKLRQTFVRMLTCRKIACVI).

Belongs to the G-protein coupled receptor T2R family.

Its subcellular location is the membrane. In terms of biological role, receptor that may play a role in the perception of bitterness and is gustducin-linked. May play a role in sensing the chemical composition of the gastrointestinal content. The activity of this receptor may stimulate alpha gustducin, mediate PLC-beta-2 activation and lead to the gating of TRPM5. The protein is Taste receptor type 2 member 8 (TAS2R8) of Gorilla gorilla gorilla (Western lowland gorilla).